Here is a 590-residue protein sequence, read N- to C-terminus: Protein phosphatase PP2A regulatory subunit A (590 aa).

11 HEAT repeats span residues 12 to 50, 89 to 127, 206 to 244, 246 to 284, 285 to 323, 324 to 362, 363 to 401, 402 to 440, 480 to 518, 519 to 551, and 562 to 590; these read PIAVLIDELKHDEITYRLNALERLSTIALALGPERTRDE, LLSPLENLAATEETVVRDKAVDSLNKVCICLSQEQLEQY, FIPLFNSLSNDDQDSVRLLSFDIMVSLAEVLKSDSEIRH, LLQPLRSFVSDSSWRTRYMVAANFVKLAKVVGPSLIKDE, LIKPFVLLMKDTEQEVRRAIATQIPGFCELLDKRIVLEE, IIPVIQELINDPAQHVRAALGMNIGALAPQLGKEKTTEY, LLPMFLELLKDENPEVRLNIISKLEVVNKVVGIELLSQS, LLPAIVTLAEDKQWRVRLAIIDYIPLLAQQLGVEFFNEK, IIPKFLAMRSHPNYLYRMTTIFAISEIAPALNAEVIEKQ, ILPTLEQLVNDPIPNIRFNVAKAFEVLKPVLAA, and IIPLLEQLTKDNDPDVQYFATQALEQTND.

Belongs to the phosphatase 2A regulatory subunit A family. PP2A exists in several trimeric forms, all of which consist of a core composed of a catalytic subunit associated with a 65 kDa (PR65) (Subunit A) and a 55 kDa (PR55) (Subunit B) regulatory subunit.

Functionally, phosphatase 2A affects a variety of biological processes in the cell such as transcription, cell cycle progression and cellular morphogenesis, and provides an initial identification of critical substrates for this phosphatase. The regulatory subunit may direct the catalytic subunit to distinct, albeit overlapping, subsets of substrates. This Schizosaccharomyces pombe (strain 972 / ATCC 24843) (Fission yeast) protein is Protein phosphatase PP2A regulatory subunit A (paa1).